A 196-amino-acid chain; its full sequence is MDERRLKGKRRVQLGKYAAVRGRKEGRLPAVMYDHRGVSVPLELAQQDFDRLFRALTRSTVLSLELDGGEVFCVFVKDYQHNMVSDRVEHVDFYAVEESVPLRMRIRLQLCGSPEGVRYGARLEKGLSYIEVESLPRNLPDRVVLDISGLGAGDVRRVRDVPLPASVVVLSDPDAVIVALSSSASEAGSPAGARTG.

The protein belongs to the bacterial ribosomal protein bL25 family. CTC subfamily. Part of the 50S ribosomal subunit; part of the 5S rRNA/L5/L18/L25 subcomplex. Contacts the 5S rRNA. Binds to the 5S rRNA independently of L5 and L18.

In terms of biological role, this is one of the proteins that binds to the 5S RNA in the ribosome where it forms part of the central protuberance. The protein is Large ribosomal subunit protein bL25 of Treponema pallidum subsp. pallidum (strain SS14).